Reading from the N-terminus, the 231-residue chain is Large ribosomal subunit protein uL1 (231 aa).

Belongs to the universal ribosomal protein uL1 family. In terms of assembly, part of the 50S ribosomal subunit.

Its function is as follows. Binds directly to 23S rRNA. The L1 stalk is quite mobile in the ribosome, and is involved in E site tRNA release. Functionally, protein L1 is also a translational repressor protein, it controls the translation of the L11 operon by binding to its mRNA. The sequence is that of Large ribosomal subunit protein uL1 from Janthinobacterium sp. (strain Marseille) (Minibacterium massiliensis).